We begin with the raw amino-acid sequence, 120 residues long: Large ribosomal subunit protein bL12 (120 aa).

Belongs to the bacterial ribosomal protein bL12 family. Homodimer. Part of the ribosomal stalk of the 50S ribosomal subunit. Forms a multimeric L10(L12)X complex, where L10 forms an elongated spine to which 2 to 4 L12 dimers bind in a sequential fashion. Binds GTP-bound translation factors.

Its function is as follows. Forms part of the ribosomal stalk which helps the ribosome interact with GTP-bound translation factors. Is thus essential for accurate translation. In Listeria innocua serovar 6a (strain ATCC BAA-680 / CLIP 11262), this protein is Large ribosomal subunit protein bL12.